A 142-amino-acid polypeptide reads, in one-letter code: Transcriptional regulator MraZ (142 aa).

SpoVT-AbrB domains are found at residues 5–51 (ASAL…PRPE) and 77–120 (AADV…DAAT).

Belongs to the MraZ family. Forms oligomers.

Its subcellular location is the cytoplasm. It localises to the nucleoid. This Ralstonia pickettii (strain 12J) protein is Transcriptional regulator MraZ.